We begin with the raw amino-acid sequence, 270 residues long: Hydroxyethylthiazole kinase (270 aa).

Substrate is bound at residue M47. ATP contacts are provided by R123 and S170. G197 contacts substrate.

The protein belongs to the Thz kinase family. Mg(2+) is required as a cofactor.

It carries out the reaction 5-(2-hydroxyethyl)-4-methylthiazole + ATP = 4-methyl-5-(2-phosphooxyethyl)-thiazole + ADP + H(+). The protein operates within cofactor biosynthesis; thiamine diphosphate biosynthesis; 4-methyl-5-(2-phosphoethyl)-thiazole from 5-(2-hydroxyethyl)-4-methylthiazole: step 1/1. In terms of biological role, catalyzes the phosphorylation of the hydroxyl group of 4-methyl-5-beta-hydroxyethylthiazole (THZ). The protein is Hydroxyethylthiazole kinase of Syntrophus aciditrophicus (strain SB).